A 1489-amino-acid chain; its full sequence is Calmodulin-regulated spectrin-associated protein 2 (1489 aa).

Residues 222-335 (WKLVPARYRK…FMAELFWWFE (114 aa)) form the Calponin-homology (CH) domain. Residues 375–415 (SSDFPSSGEGATFTQSHHHLPSRYSRPQAHSSASGGIRRSS) form a disordered region. The span at 405 to 415 (SSASGGIRRSS) shows a compositional bias: low complexity. Phosphoserine is present on residues S416 and S418. T426 carries the phosphothreonine modification. S464, S598, S599, S611, and S673 each carry phosphoserine. 2 disordered regions span residues 611 to 639 (SPIT…EDSS) and 668 to 730 (TREA…GSEL). The span at 668–679 (TREALSPCPSTV) shows a compositional bias: polar residues. Position 678 is a phosphothreonine (T678). S680 bears the Phosphoserine mark. The segment covering 680 to 699 (STKSQPGSSASSSSGVKMTS) has biased composition (low complexity). Residues 703 to 713 (QKFRKLNHTDG) show a composition bias toward basic and acidic residues. Positions 756 to 793 (LLASEMVHLRMKLEEKRRAIEAQKKKMEAAFTKQRQKM) form a coiled coil. Residues 812–844 (LREEAAGAEDEKVYTDRAKEKESQKTDGQRSKS) are disordered. At S862 the chain carries Phosphoserine. Residues 887–926 (EILEYTKSIEKLNSSLHFLQQEMQRLSLQQEMLMQMREQQ) are a coiled coil. Positions 922 to 1034 (MREQQSWVIS…IQTRSFVCFG (113 aa)) are MBD region. Residues 925-1017 (QQSWVISPPQ…SVDSLPRLRR (93 aa)) are disordered. S931 and S936 each carry phosphoserine. Polar residues predominate over residues 960-989 (SSDSPRPTHPSPQSSNRKSASFSVKSQRTP). Residues T997, T1002, and T1004 each carry the phosphothreonine modification. Phosphoserine is present on residues S1008 and S1019. Disordered regions lie at residues 1032–1078 (CFGD…PFES), 1096–1152 (PNED…DKEQ), and 1191–1349 (KETQ…EYTG). Positions 1039–1075 (PQLKESKPKEEVKKEELESKGTLEQRGHNPEEKEIKP) are enriched in basic and acidic residues. Positions 1105-1117 (TEPPPKPVFPPTA) are enriched in pro residues. Composition is skewed to basic and acidic residues over residues 1132–1152 (KPPE…DKEQ) and 1191–1252 (KETQ…DTVI). At S1148 the chain carries Phosphoserine. Residues 1166 to 1238 (KDDQKAENDM…REFIRQEYMR (73 aa)) are a coiled coil. Residues 1287–1299 (SSLSLASLNTGDN) show a composition bias toward polar residues. S1313, S1319, and S1321 each carry phosphoserine. Polar residues predominate over residues 1334-1346 (NASTTSSVASGTE). The CKK domain occupies 1349 to 1483 (GPKLYKEPSA…QTKRPVTPKK (135 aa)).

It belongs to the CAMSAP1 family. In terms of assembly, interacts with CAMSAP3. Interacts with KATNA1 and KATNB1; leading to regulate the length of CAMSAP2-decorated microtubule stretches. Interacts with a complex formed by AKAP9 and PDE4DIP isoform 13/MMG8/SMYLE, which recruits CAMSAP2 to the Golgi. Interacts with MAPRE1/EB1.

The protein resides in the cytoplasm. The protein localises to the cytoskeleton. It localises to the golgi apparatus. Its subcellular location is the cilium basal body. Functionally, key microtubule-organizing protein that specifically binds the minus-end of non-centrosomal microtubules and regulates their dynamics and organization. Specifically recognizes growing microtubule minus-ends and autonomously decorates and stabilizes microtubule lattice formed by microtubule minus-end polymerization. Acts on free microtubule minus-ends that are not capped by microtubule-nucleating proteins or other factors and protects microtubule minus-ends from depolymerization. In addition, it also reduces the velocity of microtubule polymerization. Through the microtubule cytoskeleton, also regulates the organization of cellular organelles including the Golgi and the early endosomes. Essential for the tethering, but not for nucleation of non-centrosomal microtubules at the Golgi: together with Golgi-associated proteins AKAP9 and PDE4DIP, required to tether non-centrosomal minus-end microtubules to the Golgi, an important step for polarized cell movement. Also acts as a regulator of neuronal polarity and development: localizes to non-centrosomal microtubule minus-ends in neurons and stabilizes non-centrosomal microtubules, which is required for neuronal polarity, axon specification and dendritic branch formation. Through the microtubule cytoskeleton, regulates the autophagosome transport. This is Calmodulin-regulated spectrin-associated protein 2 from Homo sapiens (Human).